A 156-amino-acid chain; its full sequence is Small ribosomal subunit protein uS7 (156 aa).

The protein belongs to the universal ribosomal protein uS7 family. In terms of assembly, part of the 30S ribosomal subunit. Contacts proteins S9 and S11.

In terms of biological role, one of the primary rRNA binding proteins, it binds directly to 16S rRNA where it nucleates assembly of the head domain of the 30S subunit. Is located at the subunit interface close to the decoding center, probably blocks exit of the E-site tRNA. The protein is Small ribosomal subunit protein uS7 of Thiobacillus denitrificans (strain ATCC 25259 / T1).